A 559-amino-acid chain; its full sequence is Hepatocyte nuclear factor 1-beta (559 aa).

A dimerization region spans residues 1-31 (MVSKLTSLQQELLSALLSSGVTKEVLVQALE). The HNF-p1 domain maps to 1–32 (MVSKLTSLQQELLSALLSSGVTKEVLVQALEE). Serine 49, serine 52, serine 75, and serine 80 each carry phosphoserine. In terms of domain architecture, POU-specific atypical spans 93–188 (KELQALNTEE…ILRQFNQTVQ (96 aa)). Positions 231–312 (MRRNRFKWGP…RRKEEEAFRQ (82 aa)) form a DNA-binding region, homeobox; HNF1-type. The span at 328 to 341 (NTLLSHSSPHHQPS) shows a compositional bias: low complexity. The tract at residues 328-371 (NTLLSHSSPHHQPSTSPPNKLPGVRYNQQGNNEVTSSSTISHHG) is disordered. Residues 353 to 371 (YNQQGNNEVTSSSTISHHG) are compositionally biased toward polar residues.

This sequence belongs to the HNF1 homeobox family. As to quaternary structure, binds DNA as a dimer. Can form homodimer or heterodimer with HNF1-alpha. Interacts (via HNF-p1 domain) with PCBD1; the interaction increases its transactivation activity.

It localises to the nucleus. Functionally, transcription factor that binds to the inverted palindrome 5'-GTTAATNATTAAC-3'. Binds to the FPC element in the cAMP regulatory unit of the PLAU gene. Transcriptional activity is increased by coactivator PCBD1. The protein is Hepatocyte nuclear factor 1-beta (HNF1B) of Sus scrofa (Pig).